A 226-amino-acid polypeptide reads, in one-letter code: Protein GrpE (226 aa).

2 disordered regions span residues 1–31 and 189–226; these read MTPNDTENAARPLPEGAVDPAQDAAGAPDTL and VSKGGPKAAEASKPAGEAPKPAGEAPKPAGDGQKPAEA. Over residues 192–218 the composition is skewed to low complexity; it reads GGPKAAEASKPAGEAPKPAGEAPKPAG.

The protein belongs to the GrpE family. In terms of assembly, homodimer.

The protein resides in the cytoplasm. Its function is as follows. Participates actively in the response to hyperosmotic and heat shock by preventing the aggregation of stress-denatured proteins, in association with DnaK and GrpE. It is the nucleotide exchange factor for DnaK and may function as a thermosensor. Unfolded proteins bind initially to DnaJ; upon interaction with the DnaJ-bound protein, DnaK hydrolyzes its bound ATP, resulting in the formation of a stable complex. GrpE releases ADP from DnaK; ATP binding to DnaK triggers the release of the substrate protein, thus completing the reaction cycle. Several rounds of ATP-dependent interactions between DnaJ, DnaK and GrpE are required for fully efficient folding. This is Protein GrpE from Methylobacterium nodulans (strain LMG 21967 / CNCM I-2342 / ORS 2060).